The primary structure comprises 224 residues: UPF0758 protein PFLU_5982 (224 aa).

The region spanning 102–224 (VLESPKAVRD…PLSMAEYGWL (123 aa)) is the MPN domain. Zn(2+)-binding residues include His173, His175, and Asp186. Positions 173–186 (HNHPSGSLEPSAAD) match the JAMM motif motif.

It belongs to the UPF0758 family.

The protein is UPF0758 protein PFLU_5982 of Pseudomonas fluorescens (strain SBW25).